The following is a 322-amino-acid chain: Protein-methionine-sulfoxide reductase catalytic subunit MsrP (322 aa).

Positions 1–59 (MSLRDALKTPSSEITDEAVYRDRRRLLQLFALTPALSVAGCAEADPPPPPKTVVTPAQA) form a signal peptide, tat-type signal. Residues asparagine 79, 82-83 (YE), cysteine 137, threonine 172, asparagine 220, arginine 225, and 236-238 (SIK) contribute to the Mo-molybdopterin site.

Belongs to the MsrP family. Heterodimer of a catalytic subunit (MsrP) and a heme-binding subunit (MsrQ). Requires Mo-molybdopterin as cofactor. Predicted to be exported by the Tat system. The position of the signal peptide cleavage has not been experimentally proven.

It is found in the periplasm. It carries out the reaction L-methionyl-[protein] + a quinone + H2O = L-methionyl-(S)-S-oxide-[protein] + a quinol. It catalyses the reaction L-methionyl-[protein] + a quinone + H2O = L-methionyl-(R)-S-oxide-[protein] + a quinol. Part of the MsrPQ system that repairs oxidized periplasmic proteins containing methionine sulfoxide residues (Met-O), using respiratory chain electrons. Thus protects these proteins from oxidative-stress damage caused by reactive species of oxygen and chlorine generated by the host defense mechanisms. MsrPQ is essential for the maintenance of envelope integrity under bleach stress, rescuing a wide series of structurally unrelated periplasmic proteins from methionine oxidation. The catalytic subunit MsrP is non-stereospecific, being able to reduce both (R-) and (S-) diastereoisomers of methionine sulfoxide. This Xanthomonas campestris pv. campestris (strain ATCC 33913 / DSM 3586 / NCPPB 528 / LMG 568 / P 25) protein is Protein-methionine-sulfoxide reductase catalytic subunit MsrP.